Reading from the N-terminus, the 185-residue chain is Elongation factor P (185 aa).

The protein belongs to the elongation factor P family.

Its subcellular location is the cytoplasm. It functions in the pathway protein biosynthesis; polypeptide chain elongation. Involved in peptide bond synthesis. Stimulates efficient translation and peptide-bond synthesis on native or reconstituted 70S ribosomes in vitro. Probably functions indirectly by altering the affinity of the ribosome for aminoacyl-tRNA, thus increasing their reactivity as acceptors for peptidyl transferase. The sequence is that of Elongation factor P from Streptococcus pyogenes serotype M4 (strain MGAS10750).